A 212-amino-acid chain; its full sequence is Ribosomal RNA small subunit methyltransferase G (212 aa).

Residues glycine 80, leucine 85, 131–132 (AE), and arginine 146 each bind S-adenosyl-L-methionine.

It belongs to the methyltransferase superfamily. RNA methyltransferase RsmG family.

The protein localises to the cytoplasm. The enzyme catalyses guanosine(527) in 16S rRNA + S-adenosyl-L-methionine = N(7)-methylguanosine(527) in 16S rRNA + S-adenosyl-L-homocysteine. Specifically methylates the N7 position of guanine in position 527 of 16S rRNA. This chain is Ribosomal RNA small subunit methyltransferase G, found in Xylella fastidiosa (strain 9a5c).